The following is a 575-amino-acid chain: MAPASLLDLVSALPATESWGPAVSDETMLDGVPFAPYSKGDKLGRMADWTEGKDRERGGRQQYGNRNYRDQQVYGANQQTNPFAIQAAEEEATFSVVDNTRTSTRTRGFGRGGGTVFGRGRGQRGGQAQRGGRGTFQRVGGRGGQQYDSRGGRGGGRGGRRFGWRDDKPQRNRDASVQVKPEWTVMEEIDFSRLGKLNLDTGDGEDLENYGFLYYYDRSYDKQPGAKTSERRLNVLERAAYNVTTSSDPILQELSDKDEATVFATDNVLSMLMCATKSVYSWDLVFSRKGNKVFIDKRDGSNLDMVTVNENAADAPLEISEGNKDSINSPGALMLEATHINNVFPLQVVSESDTNKVNMTHEHPFYNEEVETDPPASKAYRYRRFDLSLEKDDEPLHLIVRTELDAVVKNNINGEDQYLTIKALNEFDNKAQGSGGALDWRSKLASQRGAVLATEMKNNSCKLARWAVQSILAKADTMKLGFVSRTNPKNNNDHVILGVLTNKPRDFASQMALNLNNGWGIVRTIVDMVLRMDEGKYVLVKDPNKSLLRLYQVPLHTFEEEDVEDMQAPNEEDEE.

Disordered regions lie at residues 36 to 66 and 103 to 177; these read PYSK…YGNR and STRT…DASV. The segment covering 39–59 has biased composition (basic and acidic residues); sequence KGDKLGRMADWTEGKDRERGG. Over residues 109–144 the composition is skewed to gly residues; the sequence is FGRGGGTVFGRGRGQRGGQAQRGGRGTFQRVGGRGG. Over residues 163 to 174 the composition is skewed to basic and acidic residues; the sequence is GWRDDKPQRNRD. The segment at 302–316 is RNA gate; the sequence is NLDMVTVNENAADAP.

This sequence belongs to the eIF-3 subunit D family. As to quaternary structure, component of the eukaryotic translation initiation factor 3 (eIF-3) complex.

The protein resides in the cytoplasm. MRNA cap-binding component of the eukaryotic translation initiation factor 3 (eIF-3) complex, which is involved in protein synthesis of a specialized repertoire of mRNAs and, together with other initiation factors, stimulates binding of mRNA and methionyl-tRNAi to the 40S ribosome. The eIF-3 complex specifically targets and initiates translation of a subset of mRNAs involved in cell proliferation. In the eIF-3 complex, eif3d specifically recognizes and binds the 7-methylguanosine cap of a subset of mRNAs. The chain is Eukaryotic translation initiation factor 3 subunit D from Phaeosphaeria nodorum (strain SN15 / ATCC MYA-4574 / FGSC 10173) (Glume blotch fungus).